The chain runs to 565 residues: Adenine deaminase (565 aa).

The protein belongs to the metallo-dependent hydrolases superfamily. Adenine deaminase family. Mn(2+) serves as cofactor.

It catalyses the reaction adenine + H2O + H(+) = hypoxanthine + NH4(+). In Methylobacterium nodulans (strain LMG 21967 / CNCM I-2342 / ORS 2060), this protein is Adenine deaminase.